A 338-amino-acid chain; its full sequence is Fe-S cluster assembly protein DRE2 (338 aa).

Residues Met1–Lys165 are N-terminal SAM-like domain. Residues Pro166–Lys232 form a linker region. The disordered stretch occupies residues Val181–Asp223. Composition is skewed to acidic residues over residues Asn190–Leu203 and Asp213–Asp223. [2Fe-2S] cluster is bound by residues Cys242, Cys253, Cys256, and Cys258. Residues Cys242–Cys258 are fe-S binding site A. Residues Cys301, Cys304, Cys312, and Cys315 each coordinate [4Fe-4S] cluster. 2 consecutive short sequence motifs (cx2C motif) follow at residues Cys301 to Cys304 and Cys312 to Cys315. A fe-S binding site B region spans residues Cys301–Cys315.

The protein belongs to the anamorsin family. In terms of assembly, monomer. Interacts with TAH18. Interacts with MIA40. [2Fe-2S] cluster is required as a cofactor. It depends on [4Fe-4S] cluster as a cofactor.

The protein localises to the cytoplasm. It is found in the mitochondrion intermembrane space. Component of the cytosolic iron-sulfur (Fe-S) protein assembly (CIA) machinery required for the maturation of extramitochondrial Fe-S proteins. Part of an electron transfer chain functioning in an early step of cytosolic Fe-S biogenesis, facilitating the de novo assembly of a [4Fe-4S] cluster on the scaffold complex CFD1-NBP35. Electrons are transferred to DRE2 from NADPH via the FAD- and FMN-containing protein TAH18. TAH18-DRE2 are also required for the assembly of the diferric tyrosyl radical cofactor of ribonucleotide reductase (RNR), probably by providing electrons for reduction during radical cofactor maturation in the catalytic small subunit RNR2. The protein is Fe-S cluster assembly protein DRE2 of Candida glabrata (strain ATCC 2001 / BCRC 20586 / JCM 3761 / NBRC 0622 / NRRL Y-65 / CBS 138) (Yeast).